A 319-amino-acid polypeptide reads, in one-letter code: DNA-directed RNA polymerases II, IV and V subunit 3 (319 aa).

An N-acetylmethionine modification is found at M1.

Belongs to the archaeal Rpo3/eukaryotic RPB3 RNA polymerase subunit family. Component of the RNA polymerase II complex consisting of at least 12 subunits. Interacts with SHH1, CLSY1, NRPB11 and NRPD1. Interacts with IYO.

Its subcellular location is the nucleus. Its function is as follows. DNA-dependent RNA polymerase catalyzes the transcription of DNA into RNA using the four ribonucleoside triphosphates as substrates. Component of RNA polymerase II which synthesizes mRNA precursors and many functional non-coding RNAs. Pol II is the central component of the basal RNA polymerase II transcription machinery. It is composed of mobile elements that move relative to each other. NRPB3 is part of the core element with the central large cleft and the clamp element that moves to open and close the cleft. Component of RNA polymerases IV and V which mediate short-interfering RNAs (siRNA) accumulation and subsequent RNA-directed DNA methylation-dependent (RdDM) transcriptional gene silencing (TGS) of endogenous repeated sequences, including transposable elements. This is DNA-directed RNA polymerases II, IV and V subunit 3 (NRPB3) from Arabidopsis thaliana (Mouse-ear cress).